The following is an 86-amino-acid chain: Protein YwqI (86 aa).

Positions 57–83 (DYKKAVQKNIEDTKDNVDSLKEQDEAI) form a coiled coil.

In Bacillus subtilis (strain 168), this protein is Protein YwqI (ywqI).